The primary structure comprises 497 residues: Aspartyl/glutamyl-tRNA(Asn/Gln) amidotransferase subunit B (497 aa).

This sequence belongs to the GatB/GatE family. GatB subfamily. As to quaternary structure, heterotrimer of A, B and C subunits.

It carries out the reaction L-glutamyl-tRNA(Gln) + L-glutamine + ATP + H2O = L-glutaminyl-tRNA(Gln) + L-glutamate + ADP + phosphate + H(+). It catalyses the reaction L-aspartyl-tRNA(Asn) + L-glutamine + ATP + H2O = L-asparaginyl-tRNA(Asn) + L-glutamate + ADP + phosphate + 2 H(+). Functionally, allows the formation of correctly charged Asn-tRNA(Asn) or Gln-tRNA(Gln) through the transamidation of misacylated Asp-tRNA(Asn) or Glu-tRNA(Gln) in organisms which lack either or both of asparaginyl-tRNA or glutaminyl-tRNA synthetases. The reaction takes place in the presence of glutamine and ATP through an activated phospho-Asp-tRNA(Asn) or phospho-Glu-tRNA(Gln). This chain is Aspartyl/glutamyl-tRNA(Asn/Gln) amidotransferase subunit B, found in Nocardioides sp. (strain ATCC BAA-499 / JS614).